We begin with the raw amino-acid sequence, 241 residues long: uncharacterized protein (241 aa).

The tract at residues 19 to 53 (KRIGYGMGEKSSAGSSRDQTYSVKPASDVKDKKKV) is disordered. Residues 30–39 (SAGSSRDQTY) are compositionally biased toward polar residues.

This is an uncharacterized protein from Ostreid herpesvirus 1 (isolate France) (OsHV-1).